A 624-amino-acid polypeptide reads, in one-letter code: DNA-directed RNA polymerase subunit gamma (624 aa).

Zn(2+)-binding residues include cysteine 70, cysteine 72, cysteine 85, and cysteine 88. Mg(2+) is bound by residues aspartate 466, aspartate 468, and aspartate 470.

The protein belongs to the RNA polymerase beta' chain family. RpoC1 subfamily. As to quaternary structure, in cyanobacteria the RNAP catalytic core is composed of 2 alpha, 1 beta, 1 beta', 1 gamma and 1 omega subunit. When a sigma factor is associated with the core the holoenzyme is formed, which can initiate transcription. Mg(2+) serves as cofactor. Requires Zn(2+) as cofactor.

It catalyses the reaction RNA(n) + a ribonucleoside 5'-triphosphate = RNA(n+1) + diphosphate. Its function is as follows. DNA-dependent RNA polymerase catalyzes the transcription of DNA into RNA using the four ribonucleoside triphosphates as substrates. This chain is DNA-directed RNA polymerase subunit gamma, found in Synechococcus elongatus (strain ATCC 33912 / PCC 7942 / FACHB-805) (Anacystis nidulans R2).